The primary structure comprises 84 residues: Toluene-4-monooxygenase system, hydroxylase component subunit gamma (84 aa).

The protein belongs to the TmoB/XamoB family. The alkene monooxygenase multicomponent enzyme system is composed of an electron transfer component and a monooxygenase component interacting with the effector protein TmoD. The electron transfer component is composed of a ferredoxin reductase (TmoF) and a ferredoxin (TmoC), and the monooxygenase component is formed by a heterohexamer (dimer of heterotrimers) of two alpha subunits (TmoA), two beta subunits (TmoE) and two gamma subunits (TmoB).

It catalyses the reaction toluene + NADH + O2 + H(+) = 4-methylphenol + NAD(+) + H2O. Its pathway is xenobiotic degradation; toluene degradation. Inhibited by Zn(2+) and Cu(2+). Its function is as follows. Component of the toluene-4-monooxygenase multicomponent enzyme system which catalyzes the O2- and NADH-dependent hydroxylation of toluene to form p-cresol. Also able to convert benzene to phenol, catechol, and 1,2,3-trihydroxybenzene by successive hydroxylations. This Ectopseudomonas mendocina (Pseudomonas mendocina) protein is Toluene-4-monooxygenase system, hydroxylase component subunit gamma.